The sequence spans 402 residues: Serine/threonine-protein phosphatase 4 regulatory subunit 2 (402 aa).

The tract at residues 258–402 is disordered; sequence NEDQDDENTG…FSKRNKASES (145 aa). The segment covering 266–277 has biased composition (polar residues); sequence TGFSNQVINDNN. Residues 278–319 show a composition bias toward acidic residues; sequence DSQEDDDEDSDYIEEDEGDEDEDDDDDEEEEEEEDGDEDEDE. The span at 320-337 shows a compositional bias: basic and acidic residues; sequence DKHFDIKVEEEAVKEDAN. The segment covering 345–358 has biased composition (low complexity); the sequence is NVSNNSDDSSLQND.

It belongs to the PPP4R2 family. As to quaternary structure, regulatory subunit (R2) of the histone H2A phosphatase complex (HTP-C) consisting of PPH3, PSY2 and PSY4.

It is found in the nucleus. Regulatory subunit of the histone H2A phosphatase complex, which dephosphorylates H2AS128ph (gamma-H2A) that has been displaced from sites of DNA lesions in the double-stranded DNA break repair process. Dephosphorylation is necessary for efficient recovery from the DNA damage checkpoint. This chain is Serine/threonine-protein phosphatase 4 regulatory subunit 2 (PSY4), found in Candida glabrata (strain ATCC 2001 / BCRC 20586 / JCM 3761 / NBRC 0622 / NRRL Y-65 / CBS 138) (Yeast).